Consider the following 214-residue polypeptide: Adenylate kinase (214 aa).

10 to 15 (GAGKGT) contributes to the ATP binding site. Residues 30–59 (STGDMFRAAIKAGTELGKQAKALMDEGKLV) are NMP. AMP contacts are provided by residues T31, R36, 57–59 (KLV), 85–88 (GFPR), and Q92. The interval 122–159 (GRRVHQTSGRSYHIVYNPPKVEGKDDVTGEDLIIRADD) is LID. ATP contacts are provided by residues R123 and 132–133 (SY). AMP-binding residues include R156 and R167. Q200 contributes to the ATP binding site.

It belongs to the adenylate kinase family. In terms of assembly, monomer.

The protein resides in the cytoplasm. The catalysed reaction is AMP + ATP = 2 ADP. It functions in the pathway purine metabolism; AMP biosynthesis via salvage pathway; AMP from ADP: step 1/1. Its function is as follows. Catalyzes the reversible transfer of the terminal phosphate group between ATP and AMP. Plays an important role in cellular energy homeostasis and in adenine nucleotide metabolism. The sequence is that of Adenylate kinase from Haemophilus influenzae (strain PittEE).